A 205-amino-acid polypeptide reads, in one-letter code: Tumor suppressor candidate gene 1 protein homolog (205 aa).

The span at 1 to 12 shows a compositional bias: low complexity; the sequence is MWRMRGGATRRG. The interval 1 to 49 is disordered; it reads MWRMRGGATRRGSCGGEGGGSRGESGRLGRAREGGGGGGGVGWRGRAGG. The segment covering 13-23 has biased composition (gly residues); sequence SCGGEGGGSRG. The span at 24-33 shows a compositional bias: basic and acidic residues; sequence ESGRLGRARE. The segment covering 34-48 has biased composition (gly residues); that stretch reads GGGGGGGVGWRGRAG. Positions 66–110 form a coiled coil; it reads LEALRARDERDRQNARLREENARLRLENRRLRRENRSLFRQALRL. Disordered regions lie at residues 113-149 and 174-205; these read DSGE…SPRA and GARP…RPWL. Ser146 carries the post-translational modification Phosphoserine. The segment covering 196–205 has biased composition (basic and acidic residues); sequence HDPDVPRPWL.

The sequence is that of Tumor suppressor candidate gene 1 protein homolog (Tusc1) from Mus musculus (Mouse).